Consider the following 239-residue polypeptide: Large ribosomal subunit protein mL67 (239 aa).

Belongs to the mitochondrion-specific ribosomal protein mL67 family. In terms of assembly, component of the mitochondrial large ribosomal subunit (mt-LSU).

The protein resides in the nucleus. It localises to the mitochondrion. In terms of biological role, component of the mitochondrial ribosome (mitoribosome), a dedicated translation machinery responsible for the synthesis of mitochondrial genome-encoded proteins, including at least some of the essential transmembrane subunits of the mitochondrial respiratory chain. The mitoribosomes are attached to the mitochondrial inner membrane and translation products are cotranslationally integrated into the membrane. mL67/MHR1 also has extraribosomal functions, being involved in regulation of mitochondrial DNA recombination, maintenance and repair, and generation of homoplasmic cells. mL67/MHR1 also acts as transcription factor involved in regulation of RNA polymerase II-dependent transcription. In Candida albicans (strain SC5314 / ATCC MYA-2876) (Yeast), this protein is Large ribosomal subunit protein mL67 (MHR1).